The sequence spans 519 residues: Xylose import ATP-binding protein XylG (519 aa).

ABC transporter domains are found at residues 6–245 (LTMR…VGRE) and 262–507 (LDVR…LKPA). Residue 38–45 (GENGAGKS) participates in ATP binding.

The protein belongs to the ABC transporter superfamily. Xylose importer (TC 3.A.1.2.4) family. In terms of assembly, the complex is composed of two ATP-binding proteins (XylG), two transmembrane proteins (XylH) and a solute-binding protein (XylF).

Its subcellular location is the cell inner membrane. The enzyme catalyses D-xylose(out) + ATP + H2O = D-xylose(in) + ADP + phosphate + H(+). Its function is as follows. Part of the ABC transporter complex XylFGH involved in xylose import. Responsible for energy coupling to the transport system. This is Xylose import ATP-binding protein XylG from Burkholderia cenocepacia (strain HI2424).